Here is a 446-residue protein sequence, read N- to C-terminus: Probable D-serine dehydratase (446 aa).

Lysine 116 is subject to N6-(pyridoxal phosphate)lysine.

This sequence belongs to the serine/threonine dehydratase family. DsdA subfamily. It depends on pyridoxal 5'-phosphate as a cofactor.

The catalysed reaction is D-serine = pyruvate + NH4(+). The polypeptide is Probable D-serine dehydratase (Bacillus cereus (strain ZK / E33L)).